A 69-amino-acid chain; its full sequence is NAD(P)H-quinone oxidoreductase subunit L (69 aa).

2 helical membrane passes run Leu-5 to Phe-25 and Gly-40 to Leu-60.

This sequence belongs to the complex I NdhL subunit family. In terms of assembly, NDH-1 can be composed of about 15 different subunits; different subcomplexes with different compositions have been identified which probably have different functions.

It is found in the cellular thylakoid membrane. The enzyme catalyses a plastoquinone + NADH + (n+1) H(+)(in) = a plastoquinol + NAD(+) + n H(+)(out). The catalysed reaction is a plastoquinone + NADPH + (n+1) H(+)(in) = a plastoquinol + NADP(+) + n H(+)(out). NDH-1 shuttles electrons from an unknown electron donor, via FMN and iron-sulfur (Fe-S) centers, to quinones in the respiratory and/or the photosynthetic chain. The immediate electron acceptor for the enzyme in this species is believed to be plastoquinone. Couples the redox reaction to proton translocation, and thus conserves the redox energy in a proton gradient. Cyanobacterial NDH-1 also plays a role in inorganic carbon-concentration. This is NAD(P)H-quinone oxidoreductase subunit L from Acaryochloris marina (strain MBIC 11017).